We begin with the raw amino-acid sequence, 205 residues long: NADH dehydrogenase (205 aa).

FMN contacts are provided by residues 17–21 (RRSIR), Gln73, 158–159 (LG), and Arg195.

The protein belongs to the nitroreductase family. In terms of assembly, homodimer. It depends on FMN as a cofactor.

The catalysed reaction is a ubiquinone + NADH + 5 H(+)(in) = a ubiquinol + NAD(+) + 4 H(+)(out). In terms of biological role, can oxidize either NADH or NADPH with a preference for NADH. Can catalyze electron transfer from NADH to various electron acceptors which include, in addition to molecular oxygen, cytochrome c, 2,6 dichlorphenolindophenol, methylene blue, ferricyanide or P-nitroblue tetrazolium. The sequence is that of NADH dehydrogenase (nox) from Thermus thermophilus (strain ATCC 27634 / DSM 579 / HB8).